A 224-amino-acid chain; its full sequence is 4'-phosphopantetheinyl transferase (224 aa).

Residues D107, E109, and E151 each contribute to the Mg(2+) site. The tract at residues 158-189 (GKGLSLPLDSFSVRLKDDGHVSIELPDGHEPC) is peptidyl carrier protein binding.

This sequence belongs to the P-Pant transferase superfamily. Gsp/Sfp/HetI/AcpT family. The cofactor is Mg(2+).

It carries out the reaction apo-[peptidyl-carrier protein] + CoA = holo-[peptidyl-carrier protein] + adenosine 3',5'-bisphosphate + H(+). Its function is as follows. May activate the peptidyl carrier protein (PCP) domains of surfactin synthetase SRF1/2/3 and iturin A synthetase, by transferring the 4'-phosphopantetheinyl moiety of coenzyme A (CoA) to a serine residue. Required for the coproduction of the lipopeptide antibiotics, iturin A and surfactin. This is 4'-phosphopantetheinyl transferase (lpa-14) from Bacillus subtilis.